A 275-amino-acid chain; its full sequence is Formamidopyrimidine-DNA glycosylase (275 aa).

Pro2 (schiff-base intermediate with DNA) is an active-site residue. The Proton donor role is filled by Glu3. Lys58 functions as the Proton donor; for beta-elimination activity in the catalytic mechanism. Positions 92, 111, and 154 each coordinate DNA. The FPG-type zinc finger occupies 239–273 (HVYHRQGLPCQRCGTPIERIKVAQRGTHFCPHCQV). The active-site Proton donor; for delta-elimination activity is Arg263.

Belongs to the FPG family. Monomer. Zn(2+) is required as a cofactor.

It carries out the reaction Hydrolysis of DNA containing ring-opened 7-methylguanine residues, releasing 2,6-diamino-4-hydroxy-5-(N-methyl)formamidopyrimidine.. It catalyses the reaction 2'-deoxyribonucleotide-(2'-deoxyribose 5'-phosphate)-2'-deoxyribonucleotide-DNA = a 3'-end 2'-deoxyribonucleotide-(2,3-dehydro-2,3-deoxyribose 5'-phosphate)-DNA + a 5'-end 5'-phospho-2'-deoxyribonucleoside-DNA + H(+). Involved in base excision repair of DNA damaged by oxidation or by mutagenic agents. Acts as a DNA glycosylase that recognizes and removes damaged bases. Has a preference for oxidized purines, such as 7,8-dihydro-8-oxoguanine (8-oxoG). Has AP (apurinic/apyrimidinic) lyase activity and introduces nicks in the DNA strand. Cleaves the DNA backbone by beta-delta elimination to generate a single-strand break at the site of the removed base with both 3'- and 5'-phosphates. The protein is Formamidopyrimidine-DNA glycosylase of Pediococcus pentosaceus (strain ATCC 25745 / CCUG 21536 / LMG 10740 / 183-1w).